The chain runs to 339 residues: tRNA-splicing endonuclease (339 aa).

Residues tyrosine 274, histidine 285, and lysine 316 contribute to the active site.

This sequence belongs to the tRNA-intron endonuclease family. Archaeal long subfamily. In terms of assembly, homodimer. It depends on Ca(2+) as a cofactor. Mg(2+) serves as cofactor. In terms of processing, the N-terminus is blocked.

It catalyses the reaction pretRNA = a 3'-half-tRNA molecule with a 5'-OH end + a 5'-half-tRNA molecule with a 2',3'-cyclic phosphate end + an intron with a 2',3'-cyclic phosphate and a 5'-hydroxyl terminus.. Its function is as follows. Endonuclease that removes tRNA introns. Cleaves pre-tRNA at the 5'- and 3'-splice sites to release the intron. The products are an intron and two tRNA half-molecules bearing 2',3' cyclic phosphate and 5'-OH termini. Recognizes a pseudosymmetric substrate in which 2 bulged loops of 3 bases are separated by a stem of 4 bp. This Haloferax volcanii (strain ATCC 29605 / DSM 3757 / JCM 8879 / NBRC 14742 / NCIMB 2012 / VKM B-1768 / DS2) (Halobacterium volcanii) protein is tRNA-splicing endonuclease.